The chain runs to 473 residues: tRNA-2-methylthio-N(6)-dimethylallyladenosine synthase (473 aa).

An MTTase N-terminal domain is found at 5-125 (RKLHIKSYGC…LPQLLARADQ (121 aa)). Residues Cys-14, Cys-50, Cys-88, Cys-166, Cys-170, and Cys-173 each coordinate [4Fe-4S] cluster. A Radical SAM core domain is found at 152 to 384 (RARGISAFVT…QQLIDSQQSA (233 aa)). The 73-residue stretch at 387-459 (KAAIGQTVDV…RYSLLGELAA (73 aa)) folds into the TRAM domain.

Belongs to the methylthiotransferase family. MiaB subfamily. Monomer. The cofactor is [4Fe-4S] cluster.

It localises to the cytoplasm. It carries out the reaction N(6)-dimethylallyladenosine(37) in tRNA + (sulfur carrier)-SH + AH2 + 2 S-adenosyl-L-methionine = 2-methylsulfanyl-N(6)-dimethylallyladenosine(37) in tRNA + (sulfur carrier)-H + 5'-deoxyadenosine + L-methionine + A + S-adenosyl-L-homocysteine + 2 H(+). Functionally, catalyzes the methylthiolation of N6-(dimethylallyl)adenosine (i(6)A), leading to the formation of 2-methylthio-N6-(dimethylallyl)adenosine (ms(2)i(6)A) at position 37 in tRNAs that read codons beginning with uridine. The chain is tRNA-2-methylthio-N(6)-dimethylallyladenosine synthase from Rhodopseudomonas palustris (strain BisB5).